Consider the following 163-residue polypeptide: Disulfide bond formation protein B (163 aa).

At 1–9 (MKKLTYRKI) the chain is on the cytoplasmic side. A helical transmembrane segment spans residues 10–26 (QSFQAIITVLVIFASFY). Residues 27 to 44 (LEYAAGLQPCPLCLMQRV) lie on the Periplasmic side of the membrane. Cys36 and Cys39 are oxidised to a cystine. The chain crosses the membrane as a helical span at residues 45 to 58 (CVFILLGLMGVSLG). Residues 59–64 (TVKKAH) are Cytoplasmic-facing. The chain crosses the membrane as a helical span at residues 65–82 (IVSLIQFQVACAGLYFSL). At 83-139 (RQLWLQSLPSDQAPACMPGLDVLIQYFPWQTVAKALFWGAGDCAEVTWTMFGVSMPG) the chain is on the periplasmic side. Residues Cys98 and Cys125 are joined by a disulfide bond. A helical transmembrane segment spans residues 140–158 (WAAMYFLSMAIMGLFLFFR). Over 159 to 163 (TRTIN) the chain is Cytoplasmic.

Belongs to the DsbB family.

The protein localises to the cell inner membrane. Functionally, required for disulfide bond formation in some periplasmic proteins. Acts by oxidizing the DsbA protein. The chain is Disulfide bond formation protein B from Legionella pneumophila (strain Lens).